The chain runs to 132 residues: MSKSSLSKSQSCQNEEMPLCDQPLVHLEQVRQVQPEVMSLDQAQQMAEFFSALADPSRLRLMSALARQELCVCDLAAAMKVSESAVSHQLRILRSQRLVKYRRVGRNVYYSLADNHVMNLYREVADHLQESD.

Residues C20, H26, C71, C73, D114, H116, H127, and E130 each coordinate Zn(2+). One can recognise an HTH arsR-type domain in the interval 38–132 (MSLDQAQQMA…EVADHLQESD (95 aa)). A DNA-binding region (H-T-H motif) is located at residues 72 to 91 (VCDLAAAMKVSESAVSHQLR).

In terms of assembly, homodimer.

Transcriptional repressor of the expression of the ziaA gene. Controls zinc homeostasis by triggering ZiaA-mediated efflux of excess zinc into the periplasm. This is Transcriptional repressor SmtB homolog (ziaR) from Synechocystis sp. (strain ATCC 27184 / PCC 6803 / Kazusa).